The primary structure comprises 243 residues: Transcription factor TFIIS homolog (243 aa).

One can recognise a TFIIS central domain in the interval 77-201 (MRDIIQMMFF…SQQKVAEKTS (125 aa)). The segment at 202–242 (QLYKCPNCKQRMCTYREVQTRALDEPSTIFCTCKKCGHEFI) adopts a TFIIS-type zinc-finger fold. Cys-206, Cys-209, Cys-234, and Cys-237 together coordinate Zn(2+).

Belongs to the TFS-II family.

Putative initiation factor. Necessary for efficient transcription elongation past template-encoded arresting sites. This chain is Transcription factor TFIIS homolog, found in Ornithodoros (relapsing fever ticks).